A 275-amino-acid polypeptide reads, in one-letter code: 2,3,4,5-tetrahydropyridine-2,6-dicarboxylate N-succinyltransferase (275 aa).

Positions 106 and 143 each coordinate substrate.

This sequence belongs to the transferase hexapeptide repeat family. In terms of assembly, homotrimer.

Its subcellular location is the cytoplasm. The catalysed reaction is (S)-2,3,4,5-tetrahydrodipicolinate + succinyl-CoA + H2O = (S)-2-succinylamino-6-oxoheptanedioate + CoA. Its pathway is amino-acid biosynthesis; L-lysine biosynthesis via DAP pathway; LL-2,6-diaminopimelate from (S)-tetrahydrodipicolinate (succinylase route): step 1/3. The sequence is that of 2,3,4,5-tetrahydropyridine-2,6-dicarboxylate N-succinyltransferase from Burkholderia mallei (strain NCTC 10247).